A 513-amino-acid polypeptide reads, in one-letter code: tRNA-2-methylthio-N(6)-dimethylallyladenosine synthase (513 aa).

The MTTase N-terminal domain maps to 67–185 (KTFLIKTYGC…LPEILEEAYL (119 aa)). [4Fe-4S] cluster contacts are provided by Cys-76, Cys-112, Cys-146, Cys-222, Cys-226, and Cys-229. The region spanning 208-438 (REGNIKAWVN…NKKVACYSER (231 aa)) is the Radical SAM core domain. The TRAM domain occupies 441-504 (QQYEGQTVQV…QFSLNGTFIS (64 aa)).

The protein belongs to the methylthiotransferase family. MiaB subfamily. As to quaternary structure, monomer. It depends on [4Fe-4S] cluster as a cofactor.

It localises to the cytoplasm. It catalyses the reaction N(6)-dimethylallyladenosine(37) in tRNA + (sulfur carrier)-SH + AH2 + 2 S-adenosyl-L-methionine = 2-methylsulfanyl-N(6)-dimethylallyladenosine(37) in tRNA + (sulfur carrier)-H + 5'-deoxyadenosine + L-methionine + A + S-adenosyl-L-homocysteine + 2 H(+). Catalyzes the methylthiolation of N6-(dimethylallyl)adenosine (i(6)A), leading to the formation of 2-methylthio-N6-(dimethylallyl)adenosine (ms(2)i(6)A) at position 37 in tRNAs that read codons beginning with uridine. The chain is tRNA-2-methylthio-N(6)-dimethylallyladenosine synthase from Staphylococcus saprophyticus subsp. saprophyticus (strain ATCC 15305 / DSM 20229 / NCIMB 8711 / NCTC 7292 / S-41).